The following is a 506-amino-acid chain: Histone acetyltransferase esa-1 (506 aa).

A disordered region spans residues 1-24; the sequence is MSPPGGDATVGSDEKRQKGKATPD. The 53-residue stretch at 26–78 folds into the Tudor-knot domain; the sequence is IKMGCIAMVMKEGQLRRAEILSIKDTKSGRQFYCNFDNFNKRLDEWVPAARID. The segment at 82-215 is disordered; that stretch reads DVEWPNPDKD…LRTSGSMTQN (134 aa). The segment covering 87–98 has biased composition (basic and acidic residues); that stretch reads NPDKDKQKDAKT. Basic residues predominate over residues 109–120; the sequence is QPSKKNNQKKAS. The segment covering 167–178 has biased composition (basic and acidic residues); sequence GGDKGVKRKADE. The 275-residue stretch at 220-494 folds into the MYST-type HAT domain; that stretch reads SRIRNISKVE…IDPERIQWKP (275 aa). The C2HC MYST-type zinc-finger motif lies at 253–278; that stretch reads IYICEFCLSYYGELKSFVRHRQKCTL. The ESA1-RPD3 motif motif lies at 303–324; the sequence is RTWCRNLCLLSKMFLDHKTLYY. Lys320 bears the N6-acetyllysine; by autocatalysis mark. Residues 361–365 and 370–376 contribute to the acetyl-CoA site; these read ACILT and QRKGYGR. Catalysis depends on Glu396, which acts as the Proton donor/acceptor. Ser400 contacts acetyl-CoA.

Belongs to the MYST (SAS/MOZ) family. Component of the NuA4 histone acetyltransferase complex. Post-translationally, autoacetylation at Lys-320 is required for proper function.

It localises to the nucleus. The protein resides in the chromosome. It catalyses the reaction L-lysyl-[histone] + acetyl-CoA = N(6)-acetyl-L-lysyl-[histone] + CoA + H(+). The enzyme catalyses L-lysyl-[protein] + acetyl-CoA = N(6)-acetyl-L-lysyl-[protein] + CoA + H(+). The catalysed reaction is 2-hydroxyisobutanoyl-CoA + L-lysyl-[protein] = N(6)-(2-hydroxyisobutanoyl)-L-lysyl-[protein] + CoA + H(+). It carries out the reaction (2E)-butenoyl-CoA + L-lysyl-[protein] = N(6)-(2E)-butenoyl-L-lysyl-[protein] + CoA + H(+). Functionally, catalytic component of the NuA4 histone acetyltransferase (HAT) complex which is involved in epigenetic transcriptional activation of selected genes principally by acetylation of nucleosomal histones H4, H3, H2B, H2A and H2A variant H2A.Z. Acetylates histone H4 to form H4K5ac, H4K8ac, H4K12ac and H4K16ac, histone H3 to form H3K14ac, and histone H2A to form H2AK4ac and H2AK7ac. The NuA4 complex is involved in the DNA damage response and is required for chromosome segregation. The NuA4 complex plays a direct role in repair of DNA double-strand breaks (DSBs) through homologous recombination. Recruitment to promoters depends on H3K4me. Also acetylates non-histone proteins. In addition to protein acetyltransferase, can use different acyl-CoA substrates, such as 2-hydroxyisobutanoyl-CoA (2-hydroxyisobutyryl-CoA) or (2E)-butenoyl-CoA (crotonyl-CoA), and is able to mediate protein 2-hydroxyisobutyrylation and crotonylation, respectively. In Neurospora crassa (strain ATCC 24698 / 74-OR23-1A / CBS 708.71 / DSM 1257 / FGSC 987), this protein is Histone acetyltransferase esa-1 (esa-1).